Reading from the N-terminus, the 1120-residue chain is TBC1 domain family member 8B (1120 aa).

GRAM domains lie at 145–212 (LKFE…EKTS) and 285–353 (EQFN…DKTN). The region spanning 487–674 (GIPETLRGEL…NVVDCFFYDG (188 aa)) is the Rab-GAP TBC domain. In terms of domain architecture, EF-hand spans 858 to 893 (NKDSLALWTFRLLDENSDCLINFKEFSSAIDIMYNG). A disordered region spans residues 1035-1066 (SPTSSAKGFSGTVCGSGGPSEEKTGSHLEKDP). The segment covering 1054–1066 (SEEKTGSHLEKDP) has biased composition (basic and acidic residues).

In terms of assembly, interacts (via domain Rab-GAP TBC) with RAB11B (in GTP-bound form). As to expression, kidney (at protein level).

The protein resides in the cytoplasm. It localises to the cytosol. In terms of biological role, involved in vesicular recycling, probably as a RAB11B GTPase-activating protein. The sequence is that of TBC1 domain family member 8B (TBC1D8B) from Homo sapiens (Human).